The primary structure comprises 408 residues: Multidrug resistance protein MdtG (408 aa).

Transmembrane regions (helical) follow at residues 16 to 36, 58 to 78, 92 to 112, 115 to 135, 146 to 166, 173 to 193, 224 to 244, 256 to 276, 290 to 310, 319 to 339, and 378 to 398; these read LIVA…VMPF, IVFS…GGLA, LGMG…QFLI, ALLG…ATQV, TLST…GLLA, PVFF…LFCI, LFVT…ILTL, VAFI…LSAP, ILIT…YVQT, FLLG…LVYN, and AVFL…WNSL.

This sequence belongs to the major facilitator superfamily. DHA1 family. MdtG (TC 2.A.1.2.20) subfamily.

It localises to the cell inner membrane. In terms of biological role, confers resistance to fosfomycin and deoxycholate. In Escherichia coli (strain 55989 / EAEC), this protein is Multidrug resistance protein MdtG.